The chain runs to 79 residues: Putative membrane protein insertion efficiency factor (79 aa).

It belongs to the UPF0161 family.

It is found in the cell inner membrane. In terms of biological role, could be involved in insertion of integral membrane proteins into the membrane. The sequence is that of Putative membrane protein insertion efficiency factor from Rippkaea orientalis (strain PCC 8801 / RF-1) (Cyanothece sp. (strain PCC 8801)).